We begin with the raw amino-acid sequence, 131 residues long: MLNEFKQFIAKGNVMDMAVGIIIGAAFTAIVTSLVEDLINPIISLFTGGLDFSGLGLALTEGEEAAVFAYGNFIMAVINFLIIAWVVFLLVKMVNRIKEMAENEPEEAPAEDPGPTEKELLMQIRDSLAKS.

A run of 2 helical transmembrane segments spans residues 14–34 (VMDM…VTSL) and 71–91 (GNFI…FLLV).

The protein belongs to the MscL family. In terms of assembly, homopentamer.

It is found in the cell inner membrane. Channel that opens in response to stretch forces in the membrane lipid bilayer. May participate in the regulation of osmotic pressure changes within the cell. The polypeptide is Large-conductance mechanosensitive channel (Dinoroseobacter shibae (strain DSM 16493 / NCIMB 14021 / DFL 12)).